Reading from the N-terminus, the 691-residue chain is Glycine--tRNA ligase beta subunit (691 aa).

It belongs to the class-II aminoacyl-tRNA synthetase family. In terms of assembly, tetramer of two alpha and two beta subunits.

The protein localises to the cytoplasm. The catalysed reaction is tRNA(Gly) + glycine + ATP = glycyl-tRNA(Gly) + AMP + diphosphate. The polypeptide is Glycine--tRNA ligase beta subunit (Buchnera aphidicola subsp. Schizaphis graminum (strain Sg)).